Consider the following 863-residue polypeptide: Nitrate reductase [NADH] (863 aa).

Cys137 is a binding site for Mo-molybdopterin. Residues 484 to 559 (KKYVTKAMLE…LEQFYIAELA (76 aa)) form the Cytochrome b5 heme-binding domain. Heme-binding residues include His519 and His542. The FAD-binding FR-type domain maps to 602-719 (KKQKAAELKE…KGPIGHFHYD (118 aa)). Residues 659–662 (RAYT), 676–680 (VVKIY), Phe688, 693–695 (KFS), and Thr746 each bind FAD.

This sequence belongs to the nitrate reductase family. In terms of assembly, homodimer. FAD is required as a cofactor. Requires Mo-molybdopterin as cofactor. Heme serves as cofactor.

It carries out the reaction nitrite + NAD(+) + H2O = nitrate + NADH + H(+). Its function is as follows. Nitrate reductase is a key enzyme involved in the first step of nitrate assimilation in plants, fungi and bacteria. The polypeptide is Nitrate reductase [NADH] (Ulva prolifera (Green seaweed)).